The sequence spans 205 residues: Recombination protein RecR (205 aa).

The C4-type zinc finger occupies 58–75 (CSLCQNVTDKEIDPCNIC). One can recognise a Toprim domain in the interval 83-182 (RVVCVVEAPN…KVTRIARGIP (100 aa)).

The protein belongs to the RecR family.

In terms of biological role, may play a role in DNA repair. It seems to be involved in an RecBC-independent recombinational process of DNA repair. It may act with RecF and RecO. The polypeptide is Recombination protein RecR (Chloroherpeton thalassium (strain ATCC 35110 / GB-78)).